Consider the following 573-residue polypeptide: Protein FAM200A (573 aa).

Residues 1–51 (MTPESRDTTDLSPRGTQEMEGIVVVKVEEEDEEDHFQKQRNKVESSPQVLS) are disordered. At 1–513 (MTPESRDTTD…DEFPLLSRKS (513 aa)) the chain is on the extracellular side. The helical transmembrane segment at 514 to 533 (ISLLLPFTTTYLCELGFSIL) threads the bilayer. The Cytoplasmic segment spans residues 534 to 573 (TRLKTKKRNRLNSAPDMRVALSSCVPDWKELMNRQAHPSH).

Belongs to the FAM200 family.

It is found in the membrane. The chain is Protein FAM200A (FAM200A) from Macaca fascicularis (Crab-eating macaque).